We begin with the raw amino-acid sequence, 604 residues long: Threonine--tRNA ligase (604 aa).

The catalytic stretch occupies residues 209–500; the sequence is DHRKLGQEMG…LTEHFGGEFP (292 aa). Cys301, His352, and His477 together coordinate Zn(2+).

This sequence belongs to the class-II aminoacyl-tRNA synthetase family. As to quaternary structure, homodimer. It depends on Zn(2+) as a cofactor.

The protein resides in the cytoplasm. It catalyses the reaction tRNA(Thr) + L-threonine + ATP = L-threonyl-tRNA(Thr) + AMP + diphosphate + H(+). Its function is as follows. Catalyzes the attachment of threonine to tRNA(Thr) in a two-step reaction: L-threonine is first activated by ATP to form Thr-AMP and then transferred to the acceptor end of tRNA(Thr). Also edits incorrectly charged L-seryl-tRNA(Thr). The sequence is that of Threonine--tRNA ligase from Helicobacter hepaticus (strain ATCC 51449 / 3B1).